The following is a 65-amino-acid chain: Large ribosomal subunit protein bL35 (65 aa).

Belongs to the bacterial ribosomal protein bL35 family.

The chain is Large ribosomal subunit protein bL35 from Stenotrophomonas maltophilia (strain R551-3).